We begin with the raw amino-acid sequence, 166 residues long: 3-isopropylmalate dehydratase small subunit (166 aa).

Belongs to the LeuD family. LeuD type 2 subfamily. As to quaternary structure, heterodimer of LeuC and LeuD.

The enzyme catalyses (2R,3S)-3-isopropylmalate = (2S)-2-isopropylmalate. It functions in the pathway amino-acid biosynthesis; L-leucine biosynthesis; L-leucine from 3-methyl-2-oxobutanoate: step 2/4. In terms of biological role, catalyzes the isomerization between 2-isopropylmalate and 3-isopropylmalate, via the formation of 2-isopropylmaleate. This is 3-isopropylmalate dehydratase small subunit from Aliarcobacter butzleri (strain RM4018) (Arcobacter butzleri).